A 312-amino-acid polypeptide reads, in one-letter code: Acetyl-coenzyme A carboxylase carboxyl transferase subunit alpha (312 aa).

A CoA carboxyltransferase C-terminal domain is found at 25 to 286 (GDDSAVEILK…GNYIIEKLNE (262 aa)).

It belongs to the AccA family. In terms of assembly, acetyl-CoA carboxylase is a heterohexamer composed of biotin carboxyl carrier protein (AccB), biotin carboxylase (AccC) and two subunits each of ACCase subunit alpha (AccA) and ACCase subunit beta (AccD).

The protein resides in the cytoplasm. The catalysed reaction is N(6)-carboxybiotinyl-L-lysyl-[protein] + acetyl-CoA = N(6)-biotinyl-L-lysyl-[protein] + malonyl-CoA. It participates in lipid metabolism; malonyl-CoA biosynthesis; malonyl-CoA from acetyl-CoA: step 1/1. Functionally, component of the acetyl coenzyme A carboxylase (ACC) complex. First, biotin carboxylase catalyzes the carboxylation of biotin on its carrier protein (BCCP) and then the CO(2) group is transferred by the carboxyltransferase to acetyl-CoA to form malonyl-CoA. This chain is Acetyl-coenzyme A carboxylase carboxyl transferase subunit alpha, found in Campylobacter hominis (strain ATCC BAA-381 / DSM 21671 / CCUG 45161 / LMG 19568 / NCTC 13146 / CH001A).